Reading from the N-terminus, the 332-residue chain is Formamidase (332 aa).

The region spanning 14–259 is the CN hydrolase domain; that stretch reads FLTALIQYPV…WEIVTAEVYP (246 aa). Glu60 functions as the Proton acceptor in the catalytic mechanism. Lys132 acts as the Proton donor in catalysis. The active-site Nucleophile is Cys165.

It belongs to the carbon-nitrogen hydrolase superfamily. Aliphatic amidase family.

It carries out the reaction formamide + H2O = formate + NH4(+). Functionally, is an aliphatic amidase with a restricted substrate specificity, as it only hydrolyzes formamide. The sequence is that of Formamidase from Bacillus cereus (strain ZK / E33L).